The sequence spans 685 residues: Heat shock protein homolog SSE1 (685 aa).

The disordered stretch occupies residues Gln-651 to Glu-685. Basic and acidic residues predominate over residues Arg-673–Glu-685.

This sequence belongs to the heat shock protein 70 family.

It localises to the cytoplasm. The polypeptide is Heat shock protein homolog SSE1 (SSE1) (Naumovozyma castellii (Yeast)).